Consider the following 446-residue polypeptide: uncharacterized protein (446 aa).

A run of 12 helical transmembrane segments spans residues 20-40 (LIGV…IAIV), 42-62 (SGFS…FVFE), 95-115 (WVYW…ISLF), 127-147 (VFAS…LSVF), 160-180 (AAIF…LSGG), 205-225 (LIYA…AVHL), 237-257 (LMLA…LLLV), 284-304 (IFNG…LFAV), 331-351 (WPAL…SLVL), 355-375 (IYEH…LFIL), 388-408 (GKTQ…GTLF), and 414-434 (PGFF…MIYQ).

The protein belongs to the amino acid-polyamine-organocation (APC) superfamily.

It is found in the cell membrane. This is an uncharacterized protein from Bacillus subtilis (strain 168).